The primary structure comprises 212 residues: NAD(P)H-hydrate epimerase (212 aa).

One can recognise a YjeF N-terminal domain in the interval 11–212 (MRHYDFYTIN…ANDMGTYAVD (202 aa)). 60-64 (NNGGD) is a binding site for (6S)-NADPHX. Residues Asn-61 and Asp-123 each coordinate K(+). Residues 127–133 (GIGIDRA), Tyr-138, and Asp-156 contribute to the (6S)-NADPHX site. K(+) is bound at residue Ser-159.

The protein belongs to the NnrE/AIBP family. It depends on K(+) as a cofactor.

The catalysed reaction is (6R)-NADHX = (6S)-NADHX. The enzyme catalyses (6R)-NADPHX = (6S)-NADPHX. In terms of biological role, catalyzes the epimerization of the S- and R-forms of NAD(P)HX, a damaged form of NAD(P)H that is a result of enzymatic or heat-dependent hydration. This is a prerequisite for the S-specific NAD(P)H-hydrate dehydratase to allow the repair of both epimers of NAD(P)HX. This is NAD(P)H-hydrate epimerase from Limosilactobacillus reuteri (strain DSM 20016) (Lactobacillus reuteri).